Here is a 78-residue protein sequence, read N- to C-terminus: Beta-defensin 12 (78 aa).

The signal sequence occupies residues 1–27 (MALSREVFYFGFALFFIVVELPSGSWA). Cystine bridges form between cysteine 46-cysteine 73, cysteine 53-cysteine 67, and cysteine 57-cysteine 74.

This sequence belongs to the beta-defensin family. In terms of tissue distribution, only expressed in epididymis (caput, corpus and cauda).

Its subcellular location is the secreted. Its function is as follows. Has antibacterial activity. This Mus musculus (Mouse) protein is Beta-defensin 12 (Defb12).